A 132-amino-acid chain; its full sequence is Hydrogenase maturation factor HypA (132 aa).

A Ni(2+)-binding site is contributed by His-2. Cys-74, Cys-77, Cys-91, and Cys-94 together coordinate Zn(2+).

This sequence belongs to the HypA/HybF family.

In terms of biological role, involved in the maturation of [NiFe] hydrogenases. Required for nickel insertion into the metal center of the hydrogenase. The protein is Hydrogenase maturation factor HypA of Synechococcus sp. (strain JA-2-3B'a(2-13)) (Cyanobacteria bacterium Yellowstone B-Prime).